The chain runs to 75 residues: Small ribosomal subunit protein bS18 (75 aa).

This sequence belongs to the bacterial ribosomal protein bS18 family. Part of the 30S ribosomal subunit. Forms a tight heterodimer with protein bS6.

Its function is as follows. Binds as a heterodimer with protein bS6 to the central domain of the 16S rRNA, where it helps stabilize the platform of the 30S subunit. This Vibrio atlanticus (strain LGP32) (Vibrio splendidus (strain Mel32)) protein is Small ribosomal subunit protein bS18.